A 345-amino-acid chain; its full sequence is Telomere-binding protein cav (345 aa).

Residues 115–337 (RRKMVQPYPE…TITFQNTESE (223 aa)) are required for binding to Su(var)205. Disordered stretches follow at residues 145 to 180 (RLDRWQKKKSQNLSAPESSPDAHASSNDAVQSHEDQ) and 200 to 231 (PPGVSSSDLSGIGDDEDEQQQSGFQDENINRP). Short sequence motifs (su(var)205-binding Pro-containing repeat) lie at residues 231 to 237 (PETEINE) and 298 to 304 (PETEMNE).

As to quaternary structure, component of the HipHop-HOAP telomere capping complex, composed of at least HipHop and cav/HOAP, and may include Su(var)205/HP1; HipHop and cav/HOAP, but not Su(var)205, are interdependent for their protein stability. Interacts with HipHop (via N-terminus). Interacts (via C-terminus) with Su(var)205/HP1 dimer (via hinge and chromoshadow domain) and Orc1; possibly interacts with other components of the origin recognition complex (ORC). Each molecule of cav/HOAP interacts with 2 molecules of Su(var)205/HP1. The HipHop-HOAP complex recruits the MTV complex, consisting of moi/modigliani, tea and ver/verrocchio, to telomeres, forming the terminin telomere-capping complex. Interacts with moi/modigliani; the interaction is direct. Interacts with ver/verrochio; the interaction is direct. Interacts with HP6, which is also part of the terminin complex. Interacts (via N-terminus) with peo/pendolino (via N-terminus); the interaction is direct.

Its subcellular location is the nucleus. It localises to the chromosome. The protein localises to the telomere. Functionally, part of the HipHop-HOAP complex that recruits the MTV complex to form the terminin telomere-capping complex, which binds to chromosome ends in a sequence-independent manner and prevents telomere fusion. Telomere capping is independent of the origin recognition complex (ORC). The protein is Telomere-binding protein cav of Drosophila melanogaster (Fruit fly).